A 1220-amino-acid chain; its full sequence is Plasma membrane calcium-transporting ATPase 3 (1220 aa).

A compositionally biased stretch (polar residues) spans 1–20 (MGDMANSSIEFHPKPQQQRD). The tract at residues 1–23 (MGDMANSSIEFHPKPQQQRDVPQ) is disordered. Topologically, residues 1-97 (MGDMANSSIE…NFIPPKQPKT (97 aa)) are cytoplasmic. Serine 8 carries the phosphoserine modification. The chain crosses the membrane as a helical span at residues 98–118 (FLQLVWEALQDVTLIILEVAA). Topologically, residues 119–155 (IVSLGLSFYAPPGEESEACGNVSGGAEDEGEAEAGWI) are extracellular. A helical membrane pass occupies residues 156-176 (EGAAILLSVICVVLVTAFNDW). Topologically, residues 177 to 364 (SKEKQFRGLQ…KEKSVLQGKL (188 aa)) are cytoplasmic. Residues 298-355 (EEEKKDKKGKQQDGAMESSQTKAKKQDGAVAMEMQPLKSAEGGEMEEREKKKANAPKK) are disordered. 2 stretches are compositionally biased toward basic and acidic residues: residues 299–308 (EEKKDKKGKQ) and 342–355 (MEER…APKK). A helical transmembrane segment spans residues 365 to 384 (TKLAVQIGKAGLVMSAITVI). The Extracellular segment spans residues 385 to 417 (ILVLYFVIETFVVEGRTWLAECTPVYVQYFVKF). A helical transmembrane segment spans residues 418-435 (FIIGVTVLVVAVPEGLPL). Topologically, residues 436–849 (AVTISLAYSV…MWGRNVYDSI (414 aa)) are cytoplasmic. Aspartate 473 (4-aspartylphosphate intermediate) is an active-site residue. Mg(2+) contacts are provided by aspartate 794 and aspartate 798. The helical transmembrane segment at 850–869 (SKFLQFQLTVNVVAVIVAFT) threads the bilayer. At 870–879 (GACITQDSPL) the chain is on the extracellular side. The chain crosses the membrane as a helical span at residues 880–900 (KAVQMLWVNLIMDTFASLALA). The Cytoplasmic segment spans residues 901 to 920 (TEPPTESLLLRKPYGRDKPL). Residues 921-943 (ISRTMMKNILGHAVYQLAIIFTL) traverse the membrane as a helical segment. Residues 944–961 (LFVGELFFDIDSGRNAPL) are Extracellular-facing. Residues 962–983 (HSPPSEHYTIIFNTFVMMQLFN) traverse the membrane as a helical segment. Residues 984–1002 (EINARKIHGERNVFDGIFS) are Cytoplasmic-facing. The helical transmembrane segment at 1003-1024 (NPIFCTIVLGTFGIQIVIVQFG) threads the bilayer. Topologically, residues 1025–1034 (GKPFSCSPLS) are extracellular. Residues 1035–1056 (TEQWLWCLFVGVGELVWGQVIA) traverse the membrane as a helical segment. The Cytoplasmic portion of the chain corresponds to 1057 to 1220 (TIPTSQLKCL…SPLHSVETSL (164 aa)). The residue at position 1079 (threonine 1079) is a Phosphothreonine. Residues 1097-1114 (LRRGQILWFRGLNRIQTQ) are calmodulin-binding subdomain A. Threonine 1113 carries the phosphothreonine; by PKC modification. Positions 1115–1124 (IRVVKAFRSS) are calmodulin-binding subdomain B. A disordered region spans residues 1166 to 1186 (ENEERLRAPPPPSPNQNNNAI).

This sequence belongs to the cation transport ATPase (P-type) (TC 3.A.3) family. Type IIB subfamily. In terms of assembly, interacts with PDZD11. Interacts (via N-terminus) with YWHAE. Highly expressed in the cerebellum. Expressed in adrenal glands.

The protein resides in the cell membrane. Its subcellular location is the presynaptic cell membrane. It carries out the reaction Ca(2+)(in) + ATP + H2O = Ca(2+)(out) + ADP + phosphate + H(+). Down-regulated by YWHAE. Its function is as follows. ATP-driven Ca(2+) ion pump involved in the maintenance of basal intracellular Ca(2+) levels at the presynaptic terminals. Uses ATP as an energy source to transport cytosolic Ca(2+) ions across the plasma membrane to the extracellular compartment. May counter-transport protons, but the mechanism and the stoichiometry of this Ca(2+)/H(+) exchange remains to be established. The chain is Plasma membrane calcium-transporting ATPase 3 from Homo sapiens (Human).